The following is a 350-amino-acid chain: N-acetyl-gamma-glutamyl-phosphate reductase (350 aa).

Cys153 is an active-site residue.

This sequence belongs to the NAGSA dehydrogenase family. Type 1 subfamily.

The protein resides in the cytoplasm. The enzyme catalyses N-acetyl-L-glutamate 5-semialdehyde + phosphate + NADP(+) = N-acetyl-L-glutamyl 5-phosphate + NADPH + H(+). Its pathway is amino-acid biosynthesis; L-arginine biosynthesis; N(2)-acetyl-L-ornithine from L-glutamate: step 3/4. Catalyzes the NADPH-dependent reduction of N-acetyl-5-glutamyl phosphate to yield N-acetyl-L-glutamate 5-semialdehyde. This chain is N-acetyl-gamma-glutamyl-phosphate reductase, found in Thermosynechococcus vestitus (strain NIES-2133 / IAM M-273 / BP-1).